Here is a 172-residue protein sequence, read N- to C-terminus: Phosphopantetheine adenylyltransferase (172 aa).

Residue Ser-9 coordinates substrate. ATP is bound by residues 9 to 10 and His-17; that span reads SF. Substrate-binding residues include Lys-41, Leu-78, and Arg-92. ATP is bound by residues 93 to 95, Glu-103, and 128 to 134; these read GLR and GRAITST.

Belongs to the bacterial CoaD family. Homohexamer. It depends on Mg(2+) as a cofactor.

The protein localises to the cytoplasm. The catalysed reaction is (R)-4'-phosphopantetheine + ATP + H(+) = 3'-dephospho-CoA + diphosphate. It participates in cofactor biosynthesis; coenzyme A biosynthesis; CoA from (R)-pantothenate: step 4/5. Its function is as follows. Reversibly transfers an adenylyl group from ATP to 4'-phosphopantetheine, yielding dephospho-CoA (dPCoA) and pyrophosphate. This is Phosphopantetheine adenylyltransferase from Bartonella quintana (strain Toulouse) (Rochalimaea quintana).